Consider the following 117-residue polypeptide: uncharacterized protein (117 aa).

The N-terminal stretch at 1-20 (MAAVHLYIISFTALMISSTS) is a signal peptide.

This is an uncharacterized protein from Saccharomyces cerevisiae (strain ATCC 204508 / S288c) (Baker's yeast).